Here is a 496-residue protein sequence, read N- to C-terminus: Palmitoleoyl-protein carboxylesterase NOTUM (496 aa).

Residues 1-19 (MGRGVRVLLLLSLLHCAGG) form the signal peptide. Residues 21–46 (EGRKTWRRRGQQPPPPPRTEAAPAAG) form a disordered region. The residue at position 81 (Ser81) is a Phosphoserine; by FAM20C. Asn96 carries an N-linked (GlcNAc...) asparagine glycan. Residues Ser232, Asp340, and His389 each act as charge relay system in the active site.

The protein belongs to the pectinacetylesterase family. Notum subfamily. Rarely expressed in adult normal tissues.

The protein resides in the secreted. It carries out the reaction [Wnt protein]-O-(9Z)-hexadecenoyl-L-serine + H2O = [Wnt protein]-L-serine + (9Z)-hexadecenoate + H(+). Carboxylesterase that acts as a key negative regulator of the Wnt signaling pathway by specifically mediating depalmitoleoylation of WNT proteins. Serine palmitoleoylation of WNT proteins is required for efficient binding to frizzled receptors. This chain is Palmitoleoyl-protein carboxylesterase NOTUM, found in Homo sapiens (Human).